We begin with the raw amino-acid sequence, 2539 residues long: Zinc finger FYVE domain-containing protein 26 (2539 aa).

A phosphoserine mark is found at serine 297, serine 615, serine 619, and serine 703. Disordered stretches follow at residues 594 to 637 (HLPE…SLGV), 699 to 724 (ISSRSPPEKPKQESQSCSGSRDGLQS), and 738 to 806 (WRHK…SLSA). The segment covering 764–774 (PSLRRGRRTRR) has biased composition (basic residues). Over residues 787-805 (SLESTSSELSTSTSEGSLS) the composition is skewed to low complexity. A Phosphoserine modification is found at serine 800. Positions 868-895 (MFMERYQEVIQELAQVEHKIENQNSDAG) form a coiled coil. Residues 1267–1296 (DLPLSTPSSPRTTENPTLERKPYSSPRDSS) form a disordered region. Over residues 1271–1282 (STPSSPRTTENP) the composition is skewed to polar residues. 4 positions are modified to phosphoserine: serine 1742, serine 1764, serine 1780, and serine 1782. Positions 1754–1808 (ADPETLPRSPSAEFSPAAPPGISSIHSPSLRERSFPPTQPSQEFVPPATPPARHQ) are disordered. The span at 1760–1769 (PRSPSAEFSP) shows a compositional bias: low complexity. Residues 1812-1872 (DETESICMVC…VCDQCYSYCN (61 aa)) form an FYVE-type zinc finger. The Zn(2+) site is built by cysteine 1818, cysteine 1821, cysteine 1835, cysteine 1838, cysteine 1843, cysteine 1846, cysteine 1864, and cysteine 1867.

As to quaternary structure, interacts with AP5Z1, AP5B1, AP5S1 and SPG11. Interacts with TTC19 and KIF13A. As to expression, strongest expression in the adrenal gland, bone marrow, adult brain, fetal brain, lung, placenta, prostate, skeletal muscle, testis, thymus, and retina. Intermediate levels are detected in other structures, including the spinal cord.

It localises to the cytoplasm. The protein resides in the cytoskeleton. Its subcellular location is the microtubule organizing center. The protein localises to the centrosome. It is found in the midbody. Its function is as follows. Phosphatidylinositol 3-phosphate-binding protein required for the abscission step in cytokinesis: recruited to the midbody during cytokinesis and acts as a regulator of abscission. May also be required for efficient homologous recombination DNA double-strand break repair. In Homo sapiens (Human), this protein is Zinc finger FYVE domain-containing protein 26 (ZFYVE26).